An 88-amino-acid polypeptide reads, in one-letter code: uncharacterized protein (88 aa).

Residues 1-88 (MPHLPELSKQ…IRRGNPSGVA (88 aa)) are disordered. A compositionally biased stretch (basic and acidic residues) spans 21 to 65 (YRAKGEDLENSHHNNESRLAEGVHYDRNKAPALQEREKASTEKVN).

In terms of biological role, involved in osmoadaptation. This is an uncharacterized protein from Emericella nidulans (strain FGSC A4 / ATCC 38163 / CBS 112.46 / NRRL 194 / M139) (Aspergillus nidulans).